The chain runs to 79 residues: Large ribosomal subunit protein uL30 (79 aa).

Belongs to the universal ribosomal protein uL30 family. Part of the 50S ribosomal subunit.

This Anaeromyxobacter sp. (strain Fw109-5) protein is Large ribosomal subunit protein uL30.